The primary structure comprises 203 residues: Urease accessory protein UreG (203 aa).

Residue 13 to 20 coordinates GTP; sequence GPVGSGKT.

The protein belongs to the SIMIBI class G3E GTPase family. UreG subfamily. Homodimer. UreD, UreF and UreG form a complex that acts as a GTP-hydrolysis-dependent molecular chaperone, activating the urease apoprotein by helping to assemble the nickel containing metallocenter of UreC. The UreE protein probably delivers the nickel.

Its subcellular location is the cytoplasm. In terms of biological role, facilitates the functional incorporation of the urease nickel metallocenter. This process requires GTP hydrolysis, probably effectuated by UreG. The polypeptide is Urease accessory protein UreG (Psychromonas ingrahamii (strain DSM 17664 / CCUG 51855 / 37)).